We begin with the raw amino-acid sequence, 499 residues long: Bifunctional purine biosynthesis protein PurH (499 aa).

The region spanning 1-144 is the MGS-like domain; sequence MIKRALISVF…KNFQDVVVLT (144 aa).

Belongs to the PurH family.

The catalysed reaction is (6R)-10-formyltetrahydrofolate + 5-amino-1-(5-phospho-beta-D-ribosyl)imidazole-4-carboxamide = 5-formamido-1-(5-phospho-D-ribosyl)imidazole-4-carboxamide + (6S)-5,6,7,8-tetrahydrofolate. It carries out the reaction IMP + H2O = 5-formamido-1-(5-phospho-D-ribosyl)imidazole-4-carboxamide. It functions in the pathway purine metabolism; IMP biosynthesis via de novo pathway; 5-formamido-1-(5-phospho-D-ribosyl)imidazole-4-carboxamide from 5-amino-1-(5-phospho-D-ribosyl)imidazole-4-carboxamide (10-formyl THF route): step 1/1. It participates in purine metabolism; IMP biosynthesis via de novo pathway; IMP from 5-formamido-1-(5-phospho-D-ribosyl)imidazole-4-carboxamide: step 1/1. In Clostridium acetobutylicum (strain ATCC 824 / DSM 792 / JCM 1419 / IAM 19013 / LMG 5710 / NBRC 13948 / NRRL B-527 / VKM B-1787 / 2291 / W), this protein is Bifunctional purine biosynthesis protein PurH.